The following is a 391-amino-acid chain: DNA polymerase IV (391 aa).

Positions 6 to 187 (IIHVDMDAFF…LPVEMLWGVG (182 aa)) constitute a UmuC domain. Residues aspartate 10 and aspartate 105 each contribute to the Mg(2+) site. Glutamate 106 is a catalytic residue.

Belongs to the DNA polymerase type-Y family. In terms of assembly, monomer. The cofactor is Mg(2+).

It is found in the cytoplasm. The catalysed reaction is DNA(n) + a 2'-deoxyribonucleoside 5'-triphosphate = DNA(n+1) + diphosphate. Functionally, poorly processive, error-prone DNA polymerase involved in untargeted mutagenesis. Copies undamaged DNA at stalled replication forks, which arise in vivo from mismatched or misaligned primer ends. These misaligned primers can be extended by PolIV. Exhibits no 3'-5' exonuclease (proofreading) activity. May be involved in translesional synthesis, in conjunction with the beta clamp from PolIII. The polypeptide is DNA polymerase IV (Carboxydothermus hydrogenoformans (strain ATCC BAA-161 / DSM 6008 / Z-2901)).